The chain runs to 635 residues: Threonine--tRNA ligase (635 aa).

The TGS domain occupies 1–62; it reads MITITLPDGS…EHDAILRIIT (62 aa). The tract at residues 244-535 is catalytic; that stretch reads DHRKIGKAQD…LIEHYAGIWP (292 aa). Cysteine 335, histidine 386, and histidine 512 together coordinate Zn(2+).

The protein belongs to the class-II aminoacyl-tRNA synthetase family. As to quaternary structure, homodimer. The cofactor is Zn(2+).

It localises to the cytoplasm. The catalysed reaction is tRNA(Thr) + L-threonine + ATP = L-threonyl-tRNA(Thr) + AMP + diphosphate + H(+). Its function is as follows. Catalyzes the attachment of threonine to tRNA(Thr) in a two-step reaction: L-threonine is first activated by ATP to form Thr-AMP and then transferred to the acceptor end of tRNA(Thr). Also edits incorrectly charged L-seryl-tRNA(Thr). The chain is Threonine--tRNA ligase from Xylella fastidiosa (strain M12).